We begin with the raw amino-acid sequence, 306 residues long: MGGASGTLPKVAMLMGGPSAEREVSLSTGRECARALRGQGYEVVEVDAGPDLVAQLNDIKPDVAFNALHGRWGEDGCVQGLLEWLRIPYTHSGVLASALAMDKERSKAAYRTAGLPVVDSVIAAKADVMARHVIAPPYVVKPNNEGSSVGIYIVHEATNSPPQLSEEMPAQVMVEAYAPGREMTVTVMGDRALCVTDILTDGWYDYEAKYATGGSRHVLPAEIPDEIADLCHDYALRAHQVLGCRGISRTDFRWDEARGADGLVLLETNTQPGMTPTSLSPEQAEHVGLTFGQLCAWLVEDASCER.

Residues 107–300 enclose the ATP-grasp domain; that stretch reads KAAYRTAGLP…FGQLCAWLVE (194 aa). 134-184 serves as a coordination point for ATP; that stretch reads IAPPYVVKPNNEGSSVGIYIVHEATNSPPQLSEEMPAQVMVEAYAPGREMT. D251, E267, and N269 together coordinate Mg(2+).

The protein belongs to the D-alanine--D-alanine ligase family. The cofactor is Mg(2+). It depends on Mn(2+) as a cofactor.

It is found in the cytoplasm. It catalyses the reaction 2 D-alanine + ATP = D-alanyl-D-alanine + ADP + phosphate + H(+). It participates in cell wall biogenesis; peptidoglycan biosynthesis. Cell wall formation. The polypeptide is D-alanine--D-alanine ligase (Ruegeria sp. (strain TM1040) (Silicibacter sp.)).